The sequence spans 265 residues: NAD kinase 2 (265 aa).

Residue Asp51 is the Proton acceptor of the active site. NAD(+) contacts are provided by residues 51-52 (DG), 122-123 (NE), Arg149, Asp151, 162-167 (TAYNKS), and Ala186.

It belongs to the NAD kinase family. Requires a divalent metal cation as cofactor.

Its subcellular location is the cytoplasm. The enzyme catalyses NAD(+) + ATP = ADP + NADP(+) + H(+). Its function is as follows. Involved in the regulation of the intracellular balance of NAD and NADP, and is a key enzyme in the biosynthesis of NADP. Catalyzes specifically the phosphorylation on 2'-hydroxyl of the adenosine moiety of NAD to yield NADP. This chain is NAD kinase 2, found in Bacillus licheniformis (strain ATCC 14580 / DSM 13 / JCM 2505 / CCUG 7422 / NBRC 12200 / NCIMB 9375 / NCTC 10341 / NRRL NRS-1264 / Gibson 46).